Here is a 97-residue protein sequence, read N- to C-terminus: U-reduvitoxin-Pr10a (97 aa).

An N-terminal signal peptide occupies residues 1 to 18; it reads MKTALFLVFALAFIAVEG. 2 Pacifastin domains span residues 22–59 and 62–97; these read KACS…CPPR and KQSC…RLCW. Intrachain disulfides connect Cys-24-Cys-42, Cys-37-Cys-56, and Cys-40-Cys-51. The segment at 57-59 is pro-Pro-Arg motif necessary for proteolytic processing; sequence PPR. Intrachain disulfides connect Cys-65-Cys-82, Cys-77-Cys-96, and Cys-80-Cys-91.

The protein belongs to the protease inhibitor I19 family. As to expression, expressed by the venom gland.

The protein resides in the secreted. Inhibits trypsin activity and prophenoloxidase (PPO) activation, an enzyme essential for both clotting and insect innate immune responses. It does not inhibit activity of chymotrypsin and protease K, and has no effect on phenoloxidase (PO) activity. The chain is U-reduvitoxin-Pr10a from Platymeris rhadamanthus (Red spot assassin bug).